We begin with the raw amino-acid sequence, 180 residues long: Small ribosomal subunit protein eS10y (180 aa).

Residues 92 to 180 form a disordered region; it reads LKKQQKPLGR…GGGAAGSDLP (89 aa). The span at 108-128 shows a compositional bias: basic and acidic residues; that stretch reads DRPRGPPRGDGERRFGDRDGY. Positions 152 to 180 are enriched in gly residues; sequence FRGGAGGARQGFGRGAGGFGGGAAGSDLP.

Belongs to the eukaryotic ribosomal protein eS10 family.

It localises to the cytoplasm. This chain is Small ribosomal subunit protein eS10y (RPS10B), found in Arabidopsis thaliana (Mouse-ear cress).